We begin with the raw amino-acid sequence, 353 residues long: S-adenosylmethionine:tRNA ribosyltransferase-isomerase (353 aa).

This sequence belongs to the QueA family. As to quaternary structure, monomer.

It is found in the cytoplasm. It carries out the reaction 7-aminomethyl-7-carbaguanosine(34) in tRNA + S-adenosyl-L-methionine = epoxyqueuosine(34) in tRNA + adenine + L-methionine + 2 H(+). It functions in the pathway tRNA modification; tRNA-queuosine biosynthesis. Its function is as follows. Transfers and isomerizes the ribose moiety from AdoMet to the 7-aminomethyl group of 7-deazaguanine (preQ1-tRNA) to give epoxyqueuosine (oQ-tRNA). This chain is S-adenosylmethionine:tRNA ribosyltransferase-isomerase, found in Baumannia cicadellinicola subsp. Homalodisca coagulata.